The chain runs to 336 residues: Dihydroorotate dehydrogenase (quinone) (336 aa).

Residues 62–66 and Thr-86 each bind FMN; that span reads AGLDK. Lys-66 contributes to the substrate binding site. Substrate is bound at residue 111-115; sequence NRMGF. Residues Asn-139 and Asn-172 each contribute to the FMN site. Position 172 (Asn-172) interacts with substrate. Ser-175 functions as the Nucleophile in the catalytic mechanism. Residue Asn-177 participates in substrate binding. 2 residues coordinate FMN: Lys-217 and Thr-245. 246 to 247 lines the substrate pocket; that stretch reads NT. FMN-binding positions include Gly-268, Gly-297, and 318-319; that span reads YT.

It belongs to the dihydroorotate dehydrogenase family. Type 2 subfamily. In terms of assembly, monomer. Requires FMN as cofactor.

Its subcellular location is the cell membrane. The catalysed reaction is (S)-dihydroorotate + a quinone = orotate + a quinol. Its pathway is pyrimidine metabolism; UMP biosynthesis via de novo pathway; orotate from (S)-dihydroorotate (quinone route): step 1/1. In terms of biological role, catalyzes the conversion of dihydroorotate to orotate with quinone as electron acceptor. The chain is Dihydroorotate dehydrogenase (quinone) from Pseudoalteromonas translucida (strain TAC 125).